Reading from the N-terminus, the 688-residue chain is Eukaryotic translation initiation factor 3 subunit B (688 aa).

The segment at 1-28 is disordered; the sequence is MAKKKGDQYDSDGAEDQDYDEEPVFEDP. Residues 9–25 show a composition bias toward acidic residues; it reads YDSDGAEDQDYDEEPVF. Positions 57 to 141 constitute an RRM domain; that stretch reads NVIVVDNIPV…HTLLVNLFSD (85 aa). WD repeat units lie at residues 208–246, 247–287, 291–329, 332–367, 440–482, and 527–572; these read RERF…KINK, FAHS…EKRS, DGSS…LLDK, IKVQ…TLLE, EVKE…EPTM, and GDHY…KRVN. Residues 612–643 are a coiled coil; the sequence is DRVRMTRASKELLEKRAKLREQFVEYRAKRVN.

The protein belongs to the eIF-3 subunit B family. In terms of assembly, component of the eukaryotic translation initiation factor 3 (eIF-3) complex.

The protein localises to the cytoplasm. RNA-binding component of the eukaryotic translation initiation factor 3 (eIF-3) complex, which is involved in protein synthesis of a specialized repertoire of mRNAs and, together with other initiation factors, stimulates binding of mRNA and methionyl-tRNAi to the 40S ribosome. The eIF-3 complex specifically targets and initiates translation of a subset of mRNAs involved in cell proliferation. The polypeptide is Eukaryotic translation initiation factor 3 subunit B (Culex quinquefasciatus (Southern house mosquito)).